A 407-amino-acid polypeptide reads, in one-letter code: Betaine--homocysteine S-methyltransferase 1 (407 aa).

A Hcy-binding domain is found at 11-314; the sequence is KGILERLNSG…YHIRAIAEEL (304 aa). N6-succinyllysine occurs at positions 40, 93, and 98. Cys-217 contacts Zn(2+). 2 positions are modified to N6-succinyllysine: Lys-232 and Lys-241. Zn(2+) is bound by residues Cys-299 and Cys-300. Ser-330 is modified (phosphoserine). Residues Lys-340 and Lys-377 each carry the N6-succinyllysine modification.

Homotetramer. Zn(2+) is required as a cofactor.

Its subcellular location is the cytoplasm. The protein resides in the cytosol. The protein localises to the nucleus. The enzyme catalyses L-homocysteine + glycine betaine = N,N-dimethylglycine + L-methionine. It functions in the pathway amine and polyamine degradation; betaine degradation; sarcosine from betaine: step 1/2. It participates in amino-acid biosynthesis; L-methionine biosynthesis via de novo pathway; L-methionine from L-homocysteine (BhmT route): step 1/1. Involved in the regulation of homocysteine metabolism. Converts betaine and homocysteine to dimethylglycine and methionine, respectively. This reaction is also required for the irreversible oxidation of choline. The sequence is that of Betaine--homocysteine S-methyltransferase 1 (BHMT) from Bos taurus (Bovine).